We begin with the raw amino-acid sequence, 359 residues long: uncharacterized protein (359 aa).

The N-terminal stretch at 1–17 (MLGRSLTSVLIVPTGIG) is a signal peptide. Residue cysteine 18 is the site of N-palmitoyl cysteine attachment. Cysteine 18 carries S-diacylglycerol cysteine lipidation.

The protein resides in the cell membrane. This is an uncharacterized protein from Synechococcus sp. (strain ATCC 27144 / PCC 6301 / SAUG 1402/1) (Anacystis nidulans).